The following is a 270-amino-acid chain: NAD(P)H-hydrate epimerase (270 aa).

The region spanning 25-234 is the YjeF N-terminal domain; the sequence is FQQLMDLMQN…DLLAPEAIYQ (210 aa). 73–77 is a binding site for (6S)-NADPHX; that stretch reads DNGGQ. Residues N74 and D144 each contribute to the K(+) site. Residues 148 to 154 and E177 contribute to the (6S)-NADPHX site; that span reads GVGLYGH. T180 lines the K(+) pocket.

It belongs to the NnrE/AIBP family. Requires K(+) as cofactor.

It catalyses the reaction (6R)-NADHX = (6S)-NADHX. The enzyme catalyses (6R)-NADPHX = (6S)-NADPHX. Its function is as follows. Catalyzes the epimerization of the S- and R-forms of NAD(P)HX, a damaged form of NAD(P)H that is a result of enzymatic or heat-dependent hydration. This is a prerequisite for the S-specific NAD(P)H-hydrate dehydratase to allow the repair of both epimers of NAD(P)HX. This chain is NAD(P)H-hydrate epimerase, found in Legionella pneumophila subsp. pneumophila (strain Philadelphia 1 / ATCC 33152 / DSM 7513).